A 185-amino-acid chain; its full sequence is Peptidyl-tRNA hydrolase (185 aa).

Tyrosine 14 contributes to the tRNA binding site. Histidine 19 functions as the Proton acceptor in the catalytic mechanism. Tyrosine 65, asparagine 67, and asparagine 113 together coordinate tRNA.

The protein belongs to the PTH family. Monomer.

The protein localises to the cytoplasm. The catalysed reaction is an N-acyl-L-alpha-aminoacyl-tRNA + H2O = an N-acyl-L-amino acid + a tRNA + H(+). In terms of biological role, hydrolyzes ribosome-free peptidyl-tRNAs (with 1 or more amino acids incorporated), which drop off the ribosome during protein synthesis, or as a result of ribosome stalling. Its function is as follows. Catalyzes the release of premature peptidyl moieties from peptidyl-tRNA molecules trapped in stalled 50S ribosomal subunits, and thus maintains levels of free tRNAs and 50S ribosomes. The chain is Peptidyl-tRNA hydrolase from Rickettsia prowazekii (strain Madrid E).